Reading from the N-terminus, the 334-residue chain is Glycerol-3-phosphate dehydrogenase [NAD(P)+] (334 aa).

3 residues coordinate NADPH: Trp13, Arg33, and Lys106. The sn-glycerol 3-phosphate site is built by Lys106, Gly137, and Ser139. Ala141 contributes to the NADPH binding site. Lys192, Asp245, Ser255, Arg256, and Asn257 together coordinate sn-glycerol 3-phosphate. Lys192 functions as the Proton acceptor in the catalytic mechanism. Arg256 lines the NADPH pocket. The NADPH site is built by Val280 and Glu282.

It belongs to the NAD-dependent glycerol-3-phosphate dehydrogenase family.

It localises to the cytoplasm. It carries out the reaction sn-glycerol 3-phosphate + NAD(+) = dihydroxyacetone phosphate + NADH + H(+). The enzyme catalyses sn-glycerol 3-phosphate + NADP(+) = dihydroxyacetone phosphate + NADPH + H(+). It participates in membrane lipid metabolism; glycerophospholipid metabolism. Catalyzes the reduction of the glycolytic intermediate dihydroxyacetone phosphate (DHAP) to sn-glycerol 3-phosphate (G3P), the key precursor for phospholipid synthesis. This Chlamydia pneumoniae (Chlamydophila pneumoniae) protein is Glycerol-3-phosphate dehydrogenase [NAD(P)+].